The sequence spans 1266 residues: Rho GTPase-activating protein 29 (1266 aa).

Residues Ser171, Ser176, Ser179, and Ser190 each carry the phosphoserine modification. One can recognise an F-BAR domain in the interval 192–462 (IELDNLLLKN…SAKLYDPGQE (271 aa)). A coiled-coil region spans residues 296–418 (RKNEMEKQRK…EILTQLRTLV (123 aa)). Residues 482-501 (NVNKQMTNSPQTSGYEPADS) form a disordered region. Polar residues predominate over residues 483 to 495 (VNKQMTNSPQTSG). Ser501, Ser521, and Ser554 each carry phosphoserine. Residues 542-561 (DSESTGGSSESRSLDSESIS) are compositionally biased toward low complexity. The tract at residues 542-601 (DSESTGGSSESRSLDSESISPGDFHRKLPRTPSSGTMSSADDLDEREPPSPSEAGPNSLG) is disordered. The segment at 614–659 (THKFRKLRSPTKCRDCDGIVMFPGVECEECLLVCHRKCLENLVIIC) adopts a Phorbol-ester/DAG-type zinc-finger fold. In terms of domain architecture, Rho-GAP spans 673-888 (AEFIQVAKKE…FLITYSQKIF (216 aa)). Phosphoserine occurs at positions 920, 956, and 1028. Disordered stretches follow at residues 1039 to 1081 (SSPT…KVNG), 1116 to 1157 (GLTV…ATAV), and 1209 to 1266 (KSDP…PQFV). Positions 1072-1081 (SNTTRSKVNG) are enriched in polar residues. The span at 1124–1136 (NRDHPGSKAHAEP) shows a compositional bias: basic and acidic residues. Phosphoserine is present on residues Ser1149 and Ser1151. Acidic residues predominate over residues 1256-1266 (EDLEDEIPQFV). An interaction with PTPN13/PTPL1 region spans residues 1263 to 1266 (PQFV).

As to quaternary structure, interacts with PTPN13/PTPL1. Interacts with RAP2A via its coiled coil domain. Interacts with RASIP1.

Functionally, GTPase activator for the Rho-type GTPases by converting them to an inactive GDP-bound state. Has strong activity toward RHOA, and weaker activity toward RAC1 and CDC42. May act as a specific effector of RAP2A to regulate Rho. In concert with RASIP1, suppresses RhoA signaling and dampens ROCK and MYH9 activities in endothelial cells and plays an essential role in blood vessel tubulogenesis. The polypeptide is Rho GTPase-activating protein 29 (Arhgap29) (Mus musculus (Mouse)).